Consider the following 891-residue polypeptide: Shieldin complex subunit 2 (891 aa).

The tract at residues 1–61 is sufficient for interaction with SHLD3 and MAD2L2; it reads MSQGSQVHIF…AGDQEFKNLE (61 aa). The tract at residues 1–542 is interaction with ASTE1; sequence MSQGSQVHIF…TYVSTKHSYL (542 aa). 3 disordered regions span residues 184-222, 260-294, and 333-357; these read MSTG…KASD, NMEA…NEQS, and NEEN…WSCK. Basic and acidic residues predominate over residues 192–222; it reads PTGHRERQSQESFSDTRCEPQSEGAVRKASD. 2 stretches are compositionally biased toward polar residues: residues 260–271 and 342–354; these read NMEAEPTGSQGV and LCSS…NRSW. The tract at residues 695 to 866 is mediates interaction with SHLD1; it reads KYSGVVLIKA…QQDFSLLDFC (172 aa).

This sequence belongs to the SHLD2 family. In terms of assembly, component of the shieldin complex, consisting of SHLD1, SHLD2, SHLD3 and MAD2L2/REV7. Within the complex, SHLD2 forms a scaffold which interacts with a SHLD3-MAD2L2 subcomplex via its N-terminus, and with SHLD1 via its C-terminus. Interacts with TP53BP1. Interacts with RIF1. Interacts with ASTE1.

The protein resides in the chromosome. Its function is as follows. Component of the shieldin complex, which plays an important role in repair of DNA double-stranded breaks (DSBs). During G1 and S phase of the cell cycle, the complex functions downstream of TP53BP1 to promote non-homologous end joining (NHEJ) and suppress DNA end resection. Mediates various NHEJ-dependent processes including immunoglobulin class-switch recombination, and fusion of unprotected telomeres. The polypeptide is Shieldin complex subunit 2 (Mus musculus (Mouse)).